A 695-amino-acid chain; its full sequence is Zinc finger SWIM domain-containing protein 3 (695 aa).

Positions 434–490 (NAPKLRRTRLPSTPPRPKKPFRICGGGDTRLPVEEVEETKADSAQSQLPQPQDQSSK) are disordered. The span at 475 to 489 (DSAQSQLPQPQDQSS) shows a compositional bias: low complexity. Residues 530–571 (VAVQLLENSHQVSKDGCSCSCSFQQCYHLPCRHILALLHTSQ) form an SWIM-type zinc finger.

This chain is Zinc finger SWIM domain-containing protein 3 (Zswim3), found in Mus musculus (Mouse).